Here is a 214-residue protein sequence, read N- to C-terminus: tRNA (guanine-N(7)-)-methyltransferase (214 aa).

4 residues coordinate S-adenosyl-L-methionine: E44, E69, D96, and D118. Residue D118 is part of the active site. Substrate-binding positions include K122, D154, and T191–E194.

Belongs to the class I-like SAM-binding methyltransferase superfamily. TrmB family.

It carries out the reaction guanosine(46) in tRNA + S-adenosyl-L-methionine = N(7)-methylguanosine(46) in tRNA + S-adenosyl-L-homocysteine. The protein operates within tRNA modification; N(7)-methylguanine-tRNA biosynthesis. Its function is as follows. Catalyzes the formation of N(7)-methylguanine at position 46 (m7G46) in tRNA. The sequence is that of tRNA (guanine-N(7)-)-methyltransferase from Listeria monocytogenes serovar 1/2a (strain ATCC BAA-679 / EGD-e).